We begin with the raw amino-acid sequence, 200 residues long: MLVIGLTGGIGSGKTSAANIFSALGAGVVDTDEIAHELTQSGGRSLPAIRRAFGEKYITPEGALNRKEMRNLVFNDTDARRKLEAILHPLIRDEVSRRVGLAQGPYLIIVVPLLLETGHYRGIVQRVLVVDCSEGAQISRATARSGMNEQAVRAIMVAQVSRDERLGQADDVIVNNADLPNLERQVRALHKKYMTLAQGS.

The DPCK domain maps to 3 to 200 (VIGLTGGIGS…KKYMTLAQGS (198 aa)). 11–16 (GSGKTS) lines the ATP pocket.

It belongs to the CoaE family.

The protein resides in the cytoplasm. It catalyses the reaction 3'-dephospho-CoA + ATP = ADP + CoA + H(+). It participates in cofactor biosynthesis; coenzyme A biosynthesis; CoA from (R)-pantothenate: step 5/5. Functionally, catalyzes the phosphorylation of the 3'-hydroxyl group of dephosphocoenzyme A to form coenzyme A. In Nitrosospira multiformis (strain ATCC 25196 / NCIMB 11849 / C 71), this protein is Dephospho-CoA kinase.